The following is a 158-amino-acid chain: Cytochrome b562 (158 aa).

Helical transmembrane passes span 12 to 32 (ITLH…GETM), 46 to 66 (AGVG…LTLV), 87 to 107 (VAAG…ALGM), and 121 to 141 (HVLA…SALF). Heme b contacts are provided by His-15 and His-53. Residues His-121 and His-135 each contribute to the heme b site.

It belongs to the cytochrome b561 family. As to quaternary structure, homodimer. Heme b is required as a cofactor.

Its subcellular location is the cell membrane. Functionally, cytochrome b562 is an integral component of the cytochrome b-c1 complex in the cyclic electron transfer system of photosynthetic bacteria. The sequence is that of Cytochrome b562 from Cereibacter sphaeroides (strain ATCC 17023 / DSM 158 / JCM 6121 / CCUG 31486 / LMG 2827 / NBRC 12203 / NCIMB 8253 / ATH 2.4.1.) (Rhodobacter sphaeroides).